Consider the following 84-residue polypeptide: ATP synthase subunit c (84 aa).

2 helical membrane-spanning segments follow: residues 9–29 (IFGS…GFSL) and 54–74 (IVAG…LLFI).

The protein belongs to the ATPase C chain family. F-type ATPases have 2 components, F(1) - the catalytic core - and F(0) - the membrane proton channel. F(1) has five subunits: alpha(3), beta(3), gamma(1), delta(1), epsilon(1). F(0) has three main subunits: a(1), b(2) and c(10-14). The alpha and beta chains form an alternating ring which encloses part of the gamma chain. F(1) is attached to F(0) by a central stalk formed by the gamma and epsilon chains, while a peripheral stalk is formed by the delta and b chains.

It localises to the cell inner membrane. In terms of biological role, f(1)F(0) ATP synthase produces ATP from ADP in the presence of a proton or sodium gradient. F-type ATPases consist of two structural domains, F(1) containing the extramembraneous catalytic core and F(0) containing the membrane proton channel, linked together by a central stalk and a peripheral stalk. During catalysis, ATP synthesis in the catalytic domain of F(1) is coupled via a rotary mechanism of the central stalk subunits to proton translocation. Key component of the F(0) channel; it plays a direct role in translocation across the membrane. A homomeric c-ring of between 10-14 subunits forms the central stalk rotor element with the F(1) delta and epsilon subunits. This is ATP synthase subunit c from Histophilus somni (strain 129Pt) (Haemophilus somnus).